We begin with the raw amino-acid sequence, 145 residues long: D-aminoacyl-tRNA deacylase (145 aa).

The Gly-cisPro motif, important for rejection of L-amino acids motif lies at 137-138 (GP).

The protein belongs to the DTD family. In terms of assembly, homodimer.

It localises to the cytoplasm. The enzyme catalyses glycyl-tRNA(Ala) + H2O = tRNA(Ala) + glycine + H(+). It carries out the reaction a D-aminoacyl-tRNA + H2O = a tRNA + a D-alpha-amino acid + H(+). Functionally, an aminoacyl-tRNA editing enzyme that deacylates mischarged D-aminoacyl-tRNAs. Also deacylates mischarged glycyl-tRNA(Ala), protecting cells against glycine mischarging by AlaRS. Acts via tRNA-based rather than protein-based catalysis; rejects L-amino acids rather than detecting D-amino acids in the active site. By recycling D-aminoacyl-tRNA to D-amino acids and free tRNA molecules, this enzyme counteracts the toxicity associated with the formation of D-aminoacyl-tRNA entities in vivo and helps enforce protein L-homochirality. The protein is D-aminoacyl-tRNA deacylase of Salmonella typhimurium (strain LT2 / SGSC1412 / ATCC 700720).